We begin with the raw amino-acid sequence, 417 residues long: MLKREMNIADYDAELWQAMEQEKVRQEEHIELIASENYTSPRVMQAQGSQLTNKYAEGYPGKRYYGGCEYVDIVEQLAIDRAKELFGADYANVQPHSGSQANFAVYTALLEPGDTVLGMNLAHGGHLTHGSPVNFSGKLYNIVPYGIDATGHIDYADLEKQAKEHKPKMIIGGFSAYSGVVDWAKMREIADSIGAYLFVDMAHVAGLVAAGVYPNPVPHAHVVTTTTHKTLAGPRGGLILAKGGSEELYKKLNSAVFPGGQGGPLMHVIAGKAVALKEAMEPEFKTYQQQVAKNAKAMVEVFLERGYKVVSGGTDNHLFLVDLVDKNLTGKEADAALGRANITVNKNSVPNDPKSPFVTSGIRVGTPAITRRGFKEAEAKELAGWMCDVLDSINDEAVIERIKGKVLDICARFPVYA.

Lys54 carries the post-translational modification N6-acetyllysine. (6S)-5,6,7,8-tetrahydrofolate-binding positions include Leu121 and 125–127; that span reads GHL. An N6-(pyridoxal phosphate)lysine modification is found at Lys229. N6-acetyllysine is present on residues Lys250, Lys285, and Lys354. Position 355–357 (355–357) interacts with (6S)-5,6,7,8-tetrahydrofolate; sequence SPF. Lys375 is subject to N6-acetyllysine.

Belongs to the SHMT family. As to quaternary structure, homodimer. It depends on pyridoxal 5'-phosphate as a cofactor.

Its subcellular location is the cytoplasm. The catalysed reaction is (6R)-5,10-methylene-5,6,7,8-tetrahydrofolate + glycine + H2O = (6S)-5,6,7,8-tetrahydrofolate + L-serine. It participates in one-carbon metabolism; tetrahydrofolate interconversion. It functions in the pathway amino-acid biosynthesis; glycine biosynthesis; glycine from L-serine: step 1/1. Catalyzes the reversible interconversion of serine and glycine with tetrahydrofolate (THF) serving as the one-carbon carrier. This reaction serves as the major source of one-carbon groups required for the biosynthesis of purines, thymidylate, methionine, and other important biomolecules. Also exhibits THF-independent aldolase activity toward beta-hydroxyamino acids, producing glycine and aldehydes, via a retro-aldol mechanism. This chain is Serine hydroxymethyltransferase, found in Shigella sonnei (strain Ss046).